The chain runs to 104 residues: Conantokin-P (104 aa).

The N-terminal stretch at 1-26 (MQLYTYLYLLVPLVTFHLILSTGTLA) is a signal peptide. Positions 27 to 80 (HGGTLTERRSTDTTALKPEPVLLQKSDARSTDDNDKDRLTQMKRILKKRGNKAR) are excised as a propeptide. Residues 29–87 (GTLTERRSTDTTALKPEPVLLQKSDARSTDDNDKDRLTQMKRILKKRGNKARGEEEHSK) form a disordered region. The span at 52–66 (SDARSTDDNDKDRLT) shows a compositional bias: basic and acidic residues. E83, E84, E90, E94, and E103 each carry 4-carboxyglutamate. Residues E90 and E94 each coordinate a divalent metal cation. C91 and C104 are disulfide-bonded.

The protein belongs to the conotoxin B superfamily. In terms of tissue distribution, expressed by the venom duct.

The protein localises to the secreted. Conantokins inhibit N-methyl-D-aspartate (NMDA) receptors. This toxin has the highest potency for the NR2B/GRIN2B subunit, followed by NR2A/GRIN2A, NR2C/GRIN2C, and NR2D/GRIN2D subunits. This chain is Conantokin-P, found in Conus purpurascens (Purple cone).